The sequence spans 309 residues: uncharacterized protein (309 aa).

This is an uncharacterized protein from Aquifex aeolicus (strain VF5).